The sequence spans 1187 residues: Serine/threonine-protein kinase SIK3 homolog (1187 aa).

A compositionally biased stretch (low complexity) spans 1–15 (MAAVSSGAAAAAGIP). The tract at residues 1–41 (MAAVSSGAAAAAGIPNPNPNRERPQQQQQQQPASAALHPVA) is disordered. The Protein kinase domain occupies 59–310 (YEMERTIGKG…MEQICKNKWM (252 aa)). Residues 65–73 (IGKGNFAVV) and lysine 88 each bind ATP. Aspartate 181 functions as the Proton acceptor in the catalytic mechanism. At threonine 214 the chain carries Phosphothreonine. The residue at position 218 (serine 218) is a Phosphoserine. A UBA domain is found at 337 to 377 (LINEQVLMAMAEMGFDRERTLQSLHADSYDHYSATYSLLSD). Disordered regions lie at residues 548–587 (LKRPRGQSPLVTSPHPIPAVAPVDEEGSDAEPDPEAVQRS), 697–776 (IQPS…PPGS), and 1060–1092 (CADAADAGMESDHNGYGSRSTQSDSYRPRGALQ). Residues 570 to 581 (VDEEGSDAEPDP) are compositionally biased toward acidic residues. The segment covering 739 to 749 (VQYQHGSALYQ) has biased composition (polar residues).

This sequence belongs to the protein kinase superfamily. CAMK Ser/Thr protein kinase family. SNF1 subfamily. It depends on Mg(2+) as a cofactor.

The catalysed reaction is L-seryl-[protein] + ATP = O-phospho-L-seryl-[protein] + ADP + H(+). It carries out the reaction L-threonyl-[protein] + ATP = O-phospho-L-threonyl-[protein] + ADP + H(+). The polypeptide is Serine/threonine-protein kinase SIK3 homolog (Danio rerio (Zebrafish)).